Here is a 333-residue protein sequence, read N- to C-terminus: Glycogenin-1 (333 aa).

Position 2 is an N-acetylthreonine (Thr-2). 4 residues coordinate UDP: Leu-9, Thr-11, Asn-12, and Tyr-15. UDP-alpha-D-glucose is bound by residues Leu-9, Thr-11, Asn-12, and Tyr-15. Phosphoserine; by PKA; in vitro is present on Ser-44. Arg-77 serves as a coordination point for UDP. Residues Arg-77, Lys-86, Asp-102, Ala-103, Asp-104, Asn-133, Ser-134, Asp-160, Asp-163, and Gln-164 each coordinate UDP-alpha-D-glucose. Positions 102, 103, and 104 each coordinate UDP. A Mn(2+)-binding site is contributed by Asp-102. Residue Asp-104 coordinates Mn(2+). Tyr-195 is a glycosylation site (O-linked (Glc...) tyrosine). Positions 212, 215, and 218 each coordinate UDP. His-212 lines the Mn(2+) pocket. UDP-alpha-D-glucose contacts are provided by Gly-215 and Lys-218. An interaction with GYS1 region spans residues 284–316 (SHLSLGETPATTQPFVSSEERKERWEQGQADYM).

This sequence belongs to the glycosyltransferase 8 family. Glycogenin subfamily. As to quaternary structure, part of the GYS1-GYG1 complex, a heterooctamer composed of a tetramer of GYS1 and 2 dimers of GYG1, where each GYS1 protomer binds to one GYG1 subunit (via GYG1 C-terminus); the GYS1 tetramer may dissociate from GYG1 dimers to continue glycogen polymerization on its own. May also form a heterooctamer complex with GYS2 (via GYG1 C-terminus). Mn(2+) serves as cofactor. In terms of processing, self-glycosylated by the transfer of glucose residues from UDP-glucose to itself, forming an alpha-1,4-glycan of around 10 residues attached to Tyr-195. Phosphorylated. Detected in heart, skeletal muscle, brain and testis, and at lower levels in kidney.

It localises to the cytoplasm. The protein resides in the nucleus. It catalyses the reaction L-tyrosyl-[glycogenin] + UDP-alpha-D-glucose = alpha-D-glucosyl-L-tyrosyl-[glycogenin] + UDP + H(+). It carries out the reaction [1,4-alpha-D-glucosyl](n)-L-tyrosyl-[glycogenin] + UDP-alpha-D-glucose = [1,4-alpha-D-glucosyl](n+1)-L-tyrosyl-[glycogenin] + UDP + H(+). Its pathway is glycan biosynthesis; glycogen biosynthesis. Glycogenin participates in the glycogen biosynthetic process along with glycogen synthase and glycogen branching enzyme. It catalyzes the formation of a short alpha (1,4)-glucosyl chain covalently attached via a glucose 1-O-tyrosyl linkage to internal tyrosine residues and these chains act as primers for the elongation reaction catalyzed by glycogen synthase. The chain is Glycogenin-1 (GYG1) from Oryctolagus cuniculus (Rabbit).